The chain runs to 438 residues: Trigger factor (438 aa).

Positions 160-245 (DDKVTIDFVG…VKKIQQAELP (86 aa)) constitute a PPIase FKBP-type domain.

It belongs to the FKBP-type PPIase family. Tig subfamily.

Its subcellular location is the cytoplasm. It catalyses the reaction [protein]-peptidylproline (omega=180) = [protein]-peptidylproline (omega=0). In terms of biological role, involved in protein export. Acts as a chaperone by maintaining the newly synthesized protein in an open conformation. Functions as a peptidyl-prolyl cis-trans isomerase. In Francisella tularensis subsp. mediasiatica (strain FSC147), this protein is Trigger factor.